The primary structure comprises 398 residues: Phosphoglycerate kinase (398 aa).

Residues 21–23, Arg-36, 59–62, Arg-119, and Arg-157 contribute to the substrate site; these read DFN and HLGR. Residues Lys-208, Gly-296, Glu-327, and 354 to 357 each bind ATP; that span reads GGDS.

It belongs to the phosphoglycerate kinase family. Monomer.

The protein resides in the cytoplasm. The catalysed reaction is (2R)-3-phosphoglycerate + ATP = (2R)-3-phospho-glyceroyl phosphate + ADP. It functions in the pathway carbohydrate degradation; glycolysis; pyruvate from D-glyceraldehyde 3-phosphate: step 2/5. This is Phosphoglycerate kinase from Streptococcus pneumoniae (strain Taiwan19F-14).